The chain runs to 433 residues: uncharacterized protein (433 aa).

The protein belongs to the arrestin family.

This is an uncharacterized protein from Schizosaccharomyces pombe (strain 972 / ATCC 24843) (Fission yeast).